The following is a 188-amino-acid chain: RNA 2',3'-cyclic phosphodiesterase (188 aa).

Histidine 42 serves as the catalytic Proton donor. Short sequence motifs (HXTX) lie at residues 42-45 (HMTL) and 130-133 (HVTI). Histidine 130 serves as the catalytic Proton acceptor.

This sequence belongs to the 2H phosphoesterase superfamily. ThpR family.

The enzyme catalyses a 3'-end 2',3'-cyclophospho-ribonucleotide-RNA + H2O = a 3'-end 2'-phospho-ribonucleotide-RNA + H(+). Hydrolyzes RNA 2',3'-cyclic phosphodiester to an RNA 2'-phosphomonoester. The polypeptide is RNA 2',3'-cyclic phosphodiesterase (Aquifex aeolicus (strain VF5)).